Reading from the N-terminus, the 266-residue chain is rRNA adenine N-6-methyltransferase (266 aa).

Residues His14, Thr16, Gly41, Glu62, Asp87, and Asn103 each coordinate S-adenosyl-L-methionine.

It belongs to the class I-like SAM-binding methyltransferase superfamily. rRNA adenine N(6)-methyltransferase family.

Functionally, involved in erythromycin resistance. In Bacteroides fragilis, this protein is rRNA adenine N-6-methyltransferase (ermFU).